The chain runs to 278 residues: Diaminopimelate epimerase (278 aa).

Substrate is bound by residues Asn-13 and Asn-66. Cys-75 (proton donor) is an active-site residue. Residues 76-77, Asn-162, Asn-195, and 213-214 contribute to the substrate site; these read GN and ER. The active-site Proton acceptor is the Cys-222. 223–224 is a binding site for substrate; that stretch reads GT.

This sequence belongs to the diaminopimelate epimerase family. Homodimer.

It localises to the cytoplasm. The catalysed reaction is (2S,6S)-2,6-diaminopimelate = meso-2,6-diaminopimelate. It participates in amino-acid biosynthesis; L-lysine biosynthesis via DAP pathway; DL-2,6-diaminopimelate from LL-2,6-diaminopimelate: step 1/1. Functionally, catalyzes the stereoinversion of LL-2,6-diaminopimelate (L,L-DAP) to meso-diaminopimelate (meso-DAP), a precursor of L-lysine and an essential component of the bacterial peptidoglycan. This is Diaminopimelate epimerase from Trichodesmium erythraeum (strain IMS101).